Here is a 219-residue protein sequence, read N- to C-terminus: Transmembrane emp24 domain-containing protein 10 (219 aa).

A signal peptide spans 1–31 (MSGLFGPLSRPGPLPSAWLFLLLLGPSSVLG). The segment at 1–142 (MSGLFGPLSR…KNYEEIAKVE (142 aa)) is required for interaction with STX17. Residues 32-185 (ISFHLPVNSR…RDTNESTNTR (154 aa)) are Lumenal-facing. The GOLD domain occupies 41-193 (RKCLREEIHK…TRVLYFSIFS (153 aa)). Residues 147 to 178 (LEVELRRLEDLSESIVNDFAYMKKREEEMRDT) are required for TMED10 and TMED2 cis-Golgi network localization. Dimethylated arginine occurs at positions 171 and 176. Asn179 is a glycosylation site (N-linked (GlcNAc...) asparagine). A helical transmembrane segment spans residues 186–206 (VLYFSIFSMFCLIGLATWQVF). The tract at residues 204 to 219 (QVFYLRRFFKAKKLIE) is interaction with COPG1. The Cytoplasmic portion of the chain corresponds to 207–219 (YLRRFFKAKKLIE). Residues 207 to 219 (YLRRFFKAKKLIE) are interaction with ARF1 and IL1B. The COPII vesicle coat-binding motif lies at 211 to 212 (FF). A COPI vesicle coat-binding motif is present at residues 211-219 (FFKAKKLIE).

This sequence belongs to the EMP24/GP25L family. Predominantly dimeric and to a lesser extent monomeric in the ER. Monomer and dimer in ERGIC and cis-Golgi network. Forms homooligomer (via GOLD domain); the assembly is promoted by direct binding with leaderless cargos and may form a protein channel that facilitates cargo entry into the ERGIC. Forms heterooligomeric complexes with other members of the p24 family such as TMED2, TMED7 and TMED9. Interacts (via GOLD domain) with TMED2 (via GOLD domain); the complex is required for export of TMED10 from the ER to the cis-Golgi network; the complex is proposed to be involved in cis-Golgi network dynamics and / or biogenesis. Associates with the COPI vesicle coat subunits (coatomer). Tetramerization of the cytoplasmic domain at the Golgi membrane in vitro; the complex is proposed to interact with COPI coatomer and induce budding of the vesicles. Interacts with COPG1; the interaction involves TMED10 homodimer. Interacts with ARF1 (GDP-bound); the interaction probably involves a TMED10 oligomer. Interacts with SEC23A, SEC24B, SEC24C and SEC24D components of the coat protein complex II/COPII, indicative of an association of TMED10 with the COPII vesicle coat. Interacts with CD59. Interacts with MPPE1/PGAP5; the complex might recruit and sort GPI-anchored proteins to the ER-exit site, or the interaction might lead to recycling of PGAP5 between the ER and the Golgi. Interacts with F2LR1/PAR2. Interacts with KDELR2/ERD2; the interaction is disrupted by KDELR2 ligand. Found in a complex composed at least of SURF4, TMED2 and TMED10. Associates with the presenilin-dependent gamma-secretase complex. Interacts with STX17; the interaction is direct. Interacts with IL-1; the interaction is direct. Interacts with RAB21 (active GTP-bound form); the interaction is indirect and regulates TMED10 abundance and localization at the Golgi.

The protein resides in the endoplasmic reticulum membrane. It localises to the endoplasmic reticulum-Golgi intermediate compartment membrane. It is found in the golgi apparatus membrane. The protein localises to the golgi apparatus. Its subcellular location is the cis-Golgi network membrane. The protein resides in the trans-Golgi network membrane. It localises to the cytoplasmic vesicle. It is found in the secretory vesicle membrane. The protein localises to the cell membrane. Its subcellular location is the melanosome. Functionally, cargo receptor involved in protein vesicular trafficking and quality control in the endoplasmic reticulum (ER) and Golgi. The p24 protein family is a group of transmembrane proteins that bind coat protein complex I/COPI and coat protein complex II/COPII involved in vesicular trafficking between the membranes. Acts at the lumenal side for incorporation of secretory cargo molecules into transport vesicles and involved in vesicle coat formation at the cytoplasmic side. Mainly functions in the early secretory pathway and cycles between the ER, ER-Golgi intermediate compartment (ERGIC) and Golgi, mediating cargo transport through COPI and COPII-coated vesicles. In COPII vesicle-mediated anterograde transport, involved in the transport of GPI-anchored proteins by acting together with TMED2 as their cargo receptor; the function specifically implies SEC24C and SEC24D of the COPII vesicle coat and lipid raft-like microdomains of the ER. Recognizes GPI anchors structural remodeled in the ER by the GPI inositol-deacylase/PGAP1 and the metallophosphoesterase MPPE1/PGAP5. In COPI vesicle-mediated retrograde transport, involved in the biogenesis of COPI vesicles and vesicle coat recruitment. Involved in trafficking of amyloid beta A4 protein and soluble APP-beta release (independent from the modulation of gamma-secretase activity). Involved in the KDELR2-mediated retrograde transport of the toxin A subunit (CTX-A-K63)together with COPI and the COOH terminus of KDELR2. On Golgi membranes, acts as a primary receptor for ARF1-GDP, a GTP-binding protein involved in COPI-vesicle formation. Increases coatomer-dependent GTPase-activating activity of ARFGAP2 which mediates the hydrolysis of ARF1-bound GTP and therefore modulates protein trafficking from the Golgi apparatus. Involved in the exocytic trafficking of G protein-coupled receptors F2LR1/PAR2 (trypsin and tryspin-like enzyme receptor), OPRM1 (opioid receptor) and P2RY4 (UTD and UDP receptor) from the Golgi to the plasma membrane, thus contributing to receptor resensitization. In addition to its cargo receptor activity, may also act as a protein channel after oligomerization, facilitating the post-translational entry of leaderless cytoplasmic cargo into the ERGIC. Involved in the translocation into ERGIC, the vesicle entry and the secretion of leaderless cargos (lacking the secretion signal sequence), including the mature form of interleukin 1/IL-1 family members, the alpha-crystallin B chain HSPB5, the carbohydrate-binding proteins galectin-1/LGALS1 and galectin-3/LGALS3, the microtubule-associated protein Tau/MAPT, and the annexin A1/ANXA1; the translocation process is dependent on cargo protein unfolding and enhanced by chaperones HSP90AB1 and HSP90B1/GRP9. Could also associates with the presenilin-dependent gamma-secretase complex in order to regulate gamma-cleavages of the amyloid beta A4 protein to yield amyloid-beta 40/Abeta40. The sequence is that of Transmembrane emp24 domain-containing protein 10 from Mus musculus (Mouse).